We begin with the raw amino-acid sequence, 86 residues long: Large ribosomal subunit protein bL27 (86 aa).

Gly residues predominate over residues 1-10 (MAQKKGGGST). The tract at residues 1–21 (MAQKKGGGSTRNGRDSESKRL) is disordered.

It belongs to the bacterial ribosomal protein bL27 family.

This is Large ribosomal subunit protein bL27 from Bordetella petrii (strain ATCC BAA-461 / DSM 12804 / CCUG 43448).